Reading from the N-terminus, the 962-residue chain is Insulin-degrading enzyme homolog (962 aa).

Positions Met-1–Gln-10 are enriched in low complexity. A disordered region spans residues Met-1–Ile-21. His-74 serves as a coordination point for Zn(2+). Glu-77 acts as the Proton acceptor in catalysis. Residues His-78 and Glu-155 each coordinate Zn(2+).

Belongs to the peptidase M16 family. In terms of assembly, homodimer. It depends on Zn(2+) as a cofactor.

It localises to the cytoplasm. In Dictyostelium discoideum (Social amoeba), this protein is Insulin-degrading enzyme homolog.